A 252-amino-acid polypeptide reads, in one-letter code: Aspartate/glutamate leucyltransferase (252 aa).

This sequence belongs to the R-transferase family. Bpt subfamily.

It localises to the cytoplasm. The catalysed reaction is N-terminal L-glutamyl-[protein] + L-leucyl-tRNA(Leu) = N-terminal L-leucyl-L-glutamyl-[protein] + tRNA(Leu) + H(+). It catalyses the reaction N-terminal L-aspartyl-[protein] + L-leucyl-tRNA(Leu) = N-terminal L-leucyl-L-aspartyl-[protein] + tRNA(Leu) + H(+). Functions in the N-end rule pathway of protein degradation where it conjugates Leu from its aminoacyl-tRNA to the N-termini of proteins containing an N-terminal aspartate or glutamate. The protein is Aspartate/glutamate leucyltransferase of Afipia carboxidovorans (strain ATCC 49405 / DSM 1227 / KCTC 32145 / OM5) (Oligotropha carboxidovorans).